We begin with the raw amino-acid sequence, 305 residues long: N-acyl-aromatic-L-amino acid amidohydrolase (carboxylate-forming) (305 aa).

2 residues coordinate Zn(2+): H15 and E18. Substrate contacts are provided by residues R57 and 64–65; that span reads NR. H108 contributes to the Zn(2+) binding site. The substrate site is built by E171 and Y281.

The protein belongs to the AspA/AstE family. Aspartoacylase subfamily. As to quaternary structure, homotetramer. The cofactor is Zn(2+).

The protein localises to the apical cell membrane. It localises to the cytoplasm. The enzyme catalyses an N-acyl-aromatic L-alpha-amino acid + H2O = an aromatic L-alpha-amino acid + a carboxylate. The catalysed reaction is an N-acetyl-L-cysteine-S-conjugate + H2O = an S-substituted L-cysteine + acetate. Its function is as follows. Plays an important role in deacetylating mercapturic acids in kidney proximal tubules. The protein is N-acyl-aromatic-L-amino acid amidohydrolase (carboxylate-forming) (acy3) of Xenopus laevis (African clawed frog).